Consider the following 860-residue polypeptide: Leucine--tRNA ligase (860 aa).

Residues 42 to 52 (PYPSGRLHMGH) carry the 'HIGH' region motif. The 'KMSKS' region signature appears at 619–623 (KMSKS). Lysine 622 contacts ATP.

Belongs to the class-I aminoacyl-tRNA synthetase family.

The protein resides in the cytoplasm. It catalyses the reaction tRNA(Leu) + L-leucine + ATP = L-leucyl-tRNA(Leu) + AMP + diphosphate. The sequence is that of Leucine--tRNA ligase from Klebsiella pneumoniae subsp. pneumoniae (strain ATCC 700721 / MGH 78578).